Reading from the N-terminus, the 406-residue chain is Phosphopentomutase (406 aa).

Residues D10, D305, H310, D346, H347, and H358 each contribute to the Mn(2+) site.

Belongs to the phosphopentomutase family. Mn(2+) serves as cofactor.

Its subcellular location is the cytoplasm. It carries out the reaction 2-deoxy-alpha-D-ribose 1-phosphate = 2-deoxy-D-ribose 5-phosphate. It catalyses the reaction alpha-D-ribose 1-phosphate = D-ribose 5-phosphate. It functions in the pathway carbohydrate degradation; 2-deoxy-D-ribose 1-phosphate degradation; D-glyceraldehyde 3-phosphate and acetaldehyde from 2-deoxy-alpha-D-ribose 1-phosphate: step 1/2. Isomerase that catalyzes the conversion of deoxy-ribose 1-phosphate (dRib-1-P) and ribose 1-phosphate (Rib-1-P) to deoxy-ribose 5-phosphate (dRib-5-P) and ribose 5-phosphate (Rib-5-P), respectively. This is Phosphopentomutase from Rhizobium rhizogenes (strain K84 / ATCC BAA-868) (Agrobacterium radiobacter).